The primary structure comprises 200 residues: Shikimate kinase (200 aa).

41-46 (GVGKSS) is an ATP binding site. Serine 45 is a binding site for Mg(2+). Substrate is bound by residues aspartate 63, arginine 87, and glycine 109. Arginine 147 contacts ATP. Arginine 166 contributes to the substrate binding site.

This sequence belongs to the shikimate kinase family. Monomer. The cofactor is Mg(2+).

Its subcellular location is the cytoplasm. The catalysed reaction is shikimate + ATP = 3-phosphoshikimate + ADP + H(+). It participates in metabolic intermediate biosynthesis; chorismate biosynthesis; chorismate from D-erythrose 4-phosphate and phosphoenolpyruvate: step 5/7. Catalyzes the specific phosphorylation of the 3-hydroxyl group of shikimic acid using ATP as a cosubstrate. This is Shikimate kinase from Caulobacter vibrioides (strain NA1000 / CB15N) (Caulobacter crescentus).